An 80-amino-acid polypeptide reads, in one-letter code: RNA-binding protein Hfq (80 aa).

Residues 10-69 enclose the Sm domain; sequence DPFLNLLRKEHVPVSIYLVNGIKLQGHIESFDQYVVLLRNTVTQMVYKHAISTVVPGRPV.

Belongs to the Hfq family. Homohexamer.

RNA chaperone that binds small regulatory RNA (sRNAs) and mRNAs to facilitate mRNA translational regulation in response to envelope stress, environmental stress and changes in metabolite concentrations. Also binds with high specificity to tRNAs. This chain is RNA-binding protein Hfq, found in Leptothrix cholodnii (strain ATCC 51168 / LMG 8142 / SP-6) (Leptothrix discophora (strain SP-6)).